The primary structure comprises 383 residues: tRNA-specific 2-thiouridylase MnmA (383 aa).

ATP-binding positions include 31–38 and L57; that span reads GLSGGVDS. The active-site Nucleophile is C118. C118 and C217 are disulfide-bonded. G143 provides a ligand contact to ATP. The segment at 167 to 169 is interaction with tRNA; sequence KDQ. The Cysteine persulfide intermediate role is filled by C217. Residues 322-323 are interaction with tRNA; the sequence is RY.

The protein belongs to the MnmA/TRMU family.

Its subcellular location is the cytoplasm. The enzyme catalyses S-sulfanyl-L-cysteinyl-[protein] + uridine(34) in tRNA + AH2 + ATP = 2-thiouridine(34) in tRNA + L-cysteinyl-[protein] + A + AMP + diphosphate + H(+). Functionally, catalyzes the 2-thiolation of uridine at the wobble position (U34) of tRNA, leading to the formation of s(2)U34. The chain is tRNA-specific 2-thiouridylase MnmA from Synechococcus sp. (strain RCC307).